The primary structure comprises 293 residues: Shikimate dehydrogenase (NADP(+)) (293 aa).

Shikimate-binding positions include 26-28 (SKS) and Thr73. Lys77 (proton acceptor) is an active-site residue. Asp89 contacts NADP(+). Shikimate is bound by residues Asn98 and Asp113. Residues 137–141 (GAGGA), 161–166 (NRTKQR), and Ile231 contribute to the NADP(+) site. Tyr233 provides a ligand contact to shikimate. Gly254 is a binding site for NADP(+).

It belongs to the shikimate dehydrogenase family. As to quaternary structure, homodimer.

It carries out the reaction shikimate + NADP(+) = 3-dehydroshikimate + NADPH + H(+). The protein operates within metabolic intermediate biosynthesis; chorismate biosynthesis; chorismate from D-erythrose 4-phosphate and phosphoenolpyruvate: step 4/7. Involved in the biosynthesis of the chorismate, which leads to the biosynthesis of aromatic amino acids. Catalyzes the reversible NADPH linked reduction of 3-dehydroshikimate (DHSA) to yield shikimate (SA). The protein is Shikimate dehydrogenase (NADP(+)) of Bartonella henselae (strain ATCC 49882 / DSM 28221 / CCUG 30454 / Houston 1) (Rochalimaea henselae).